The sequence spans 115 residues: Androgen-binding protein homolog (115 aa).

An N-terminal signal peptide occupies residues 1-23 (MKGTLLLLALLVTGELGFQTTEA).

Belongs to the secretoglobin family.

The protein localises to the secreted. The polypeptide is Androgen-binding protein homolog (Mesocricetus auratus (Golden hamster)).